A 267-amino-acid polypeptide reads, in one-letter code: Tryptophan synthase alpha chain (267 aa).

Catalysis depends on proton acceptor residues E43 and D54.

The protein belongs to the TrpA family. In terms of assembly, tetramer of two alpha and two beta chains.

It carries out the reaction (1S,2R)-1-C-(indol-3-yl)glycerol 3-phosphate + L-serine = D-glyceraldehyde 3-phosphate + L-tryptophan + H2O. The protein operates within amino-acid biosynthesis; L-tryptophan biosynthesis; L-tryptophan from chorismate: step 5/5. Functionally, the alpha subunit is responsible for the aldol cleavage of indoleglycerol phosphate to indole and glyceraldehyde 3-phosphate. The polypeptide is Tryptophan synthase alpha chain (Bacillus subtilis (strain 168)).